The sequence spans 83 residues: Turripeptide Lol11.2 (83 aa).

A signal peptide spans 1–27; it reads MARLMMTVGCLIFIVVLLDMMVPVSNT.

The protein belongs to the conopeptide I2-like superfamily. Contains 4 disulfide bonds. As to expression, expressed by the venom duct.

It is found in the secreted. In terms of biological role, acts as a neurotoxin by inhibiting voltage-gated potassium channels (Kv). The polypeptide is Turripeptide Lol11.2 (Iotyrris olangoensis (Sea snail)).